The chain runs to 234 residues: LexA repressor (234 aa).

Positions 41 to 61 (RAEIANELGFKSANAAEEHLQ) form a DNA-binding region, H-T-H motif. Residues serine 152 and lysine 189 each act as for autocatalytic cleavage activity in the active site.

The protein belongs to the peptidase S24 family. As to quaternary structure, homodimer.

It catalyses the reaction Hydrolysis of Ala-|-Gly bond in repressor LexA.. Functionally, represses a number of genes involved in the response to DNA damage (SOS response), including recA and lexA. In the presence of single-stranded DNA, RecA interacts with LexA causing an autocatalytic cleavage which disrupts the DNA-binding part of LexA, leading to derepression of the SOS regulon and eventually DNA repair. The polypeptide is LexA repressor (Polaromonas sp. (strain JS666 / ATCC BAA-500)).